Consider the following 267-residue polypeptide: V-type proton ATPase subunit D (267 aa).

It belongs to the V-ATPase D subunit family. As to quaternary structure, V-ATPase is a heteromultimeric enzyme composed of a peripheral catalytic V1 complex (components A to H) attached to an integral membrane V0 proton pore complex (components: a, c, c', c'', d, e, f and VOA1).

Its subcellular location is the vacuole membrane. Functionally, subunit of the V1 complex of vacuolar(H+)-ATPase (V-ATPase), a multisubunit enzyme composed of a peripheral complex (V1) that hydrolyzes ATP and a membrane integral complex (V0) that translocates protons. V-ATPase is responsible for acidifying and maintaining the pH of intracellular compartments. This chain is V-type proton ATPase subunit D (VMA8), found in Candida albicans (strain SC5314 / ATCC MYA-2876) (Yeast).